The primary structure comprises 478 residues: Microfibrillar-associated protein 1 (478 aa).

Low complexity predominate over residues Met1 to Ile20. Disordered regions lie at residues Met1–Thr276 and Asn456–Glu478. Residues Ser53–Phe62 are compositionally biased toward acidic residues. A compositionally biased stretch (basic and acidic residues) spans Asp107 to Arg128. The segment covering Ile140–Gly153 has biased composition (acidic residues). Positions Arg160–Glu170 are enriched in polar residues. The span at Ser171–Glu181 shows a compositional bias: acidic residues. Positions Gln197–Glu212 are enriched in basic and acidic residues. Residues Ser214–Asn231 show a composition bias toward acidic residues. An interaction with Prp38 region spans residues Glu229–Glu478. Residues Arg245–Ala268 show a composition bias toward basic and acidic residues.

Belongs to the MFAP1 family. As to quaternary structure, component of the spliceosome B complex. Interacts (via C-terminus) with Prp38.

Its subcellular location is the nucleus. Its function is as follows. Required for pre-mRNA splicing. The protein is Microfibrillar-associated protein 1 of Drosophila melanogaster (Fruit fly).